A 526-amino-acid chain; its full sequence is Acid-sensing ion channel 1 (526 aa).

The Cytoplasmic segment spans residues 1-49 (MELKTEEEEVGGVQPVSIQAFASSSTLHGLAHIFSYERLSLKRALWALC). A helical membrane pass occupies residues 50-66 (FLGSLAVLLCVCTERVQ). Over 67 to 425 (YYFCYHHVTK…ETIEQKKAYE (359 aa)) the chain is Extracellular. Disulfide bonds link Cys-93/Cys-194, Cys-172/Cys-179, Cys-290/Cys-365, Cys-308/Cys-361, Cys-312/Cys-359, Cys-321/Cys-343, and Cys-323/Cys-335. 2 N-linked (GlcNAc...) asparagine glycosylation sites follow: Asn-366 and Asn-393. The chain crosses the membrane as a discontinuously helical span at residues 426-456 (IAGLLGDIGGQMGLFIGASILTVLELFDYAY). The GAS motif; ion selectivity filter signature appears at 442-444 (GAS). Topologically, residues 457–526 (EVIKHRLCRR…ARGTFEDFTC (70 aa)) are cytoplasmic. A phosphoserine mark is found at Ser-477 and Ser-497.

This sequence belongs to the amiloride-sensitive sodium channel (TC 1.A.6) family. ASIC1 subfamily. In terms of assembly, homotrimer. Heterotrimer; with other ASIC proteins producing channel with different properties. Interacts with PICK1; regulates ASIC1 clustering in membranes. Interacts with STOM; alters heterotrimeric ASIC channels activity. PH-gating could be regulated by serine proteases. In terms of processing, phosphorylation by PKA regulates interaction with PICK1 and subcellular localization. Phosphorylation by PKC may regulate the channel. Expressed in dorsal root ganglia and sciatic nerve (at protein level). Widely distributed throughout the brain. Expressed in olfactory bulb, neo and allocortical regions, dentate granule cells, pyramidal cells of CA1-CA3 subfields of the hippocampal formation, habenula, basolateral amygdaloid nuclei, and in the Purkinje and granule cells of the cerebellum. Diffusely detected over most other regions of the basal ganglia, including thalamic nuclei, substantia nigra, striatum and globus pallidus, hypothalamus, midbrain, pons, medulla and choroid plexus. As to expression, expressed only in dorsal root ganglion (DRG). In terms of tissue distribution, expressed exclusively in trigeminal ganglion and dorsal root ganglion.

It is found in the cell membrane. Its subcellular location is the postsynaptic cell membrane. The protein localises to the cell projection. The protein resides in the dendrite. The catalysed reaction is Na(+)(in) = Na(+)(out). The enzyme catalyses Li(+)(in) = Li(+)(out). It carries out the reaction K(+)(in) = K(+)(out). It catalyses the reaction Ca(2+)(in) = Ca(2+)(out). The catalysed reaction is H(+)(in) = H(+)(out). Inhibited by the diuretic drug amiloride. External calcium is required to potentiate proton activation of ASIC1 at physiological concentrations, but at higher, non-physiological concentrations, it inhibits activation. Also potentiated by other multivalent cations like Mg(2+), Ba(2+). Activated by FMRFamide-related neuropeptides. Inhibited by anti-inflammatory drugs like salicylic acid. The spider venom psalmotoxin-1 specifically inhibits the ASIC1 homotrimer. The snake venom mambalgin-1, mambalgin-2 and mambalgin-3 inhibit the homotrimer of Asic1a (ASIC1 isoform 1). The snake venom mambalgin-1 and mambalgin-2 inhibit heterotrimers of Asic1a-Asic1b (ASIC1 isoform 1-ASIC1 isoform 3). Heterotrimer of Asic1a-Asic2a is inhibited by the snake venom mambalgin-1, mambalgin-2 and mambalgin-3. Heterotrimer of Asic1a-Asic2b is inhibited by the snake venom mambalgin-1 and mambalgin-2. The spider venom Pi-theraphotoxin-Hm3a inhibits the homotrimer of Asic1a (ASIC1 isoform 1). The spider venom Pi-theraphotoxin-Hm3a inhibits heterotrimers of Asic1a-Asic1b (ASIC1 isoform 1-ASIC1 isoform 3). The spider venom Pi-hexatoxin-Hi1a inhibits the ASIC1 homotrimer. With respect to regulation, not inhibited by extracellular calcium. Functionally, forms voltage-independent, pH-gated trimeric sodium channels that act as postsynaptic excitatory receptors in the nervous system, playing a crucial role in regulating synaptic plasticity, learning, and memory. Upon extracellular pH drop this channel elicits transient, fast activating, and completely desensitizing inward currents. Displays high selectivity for sodium ions but can also permit the permeation of other cations. Regulates more or less directly intracellular calcium concentration and CaMKII phosphorylation, and thereby the density of dendritic spines. Modulates neuronal activity in the circuits underlying innate fear. In terms of biological role, permeable to other cations including calcium, lithium and potassium. PH activation and steady-state inactivation are shifted to more acidic values. Forms channels that are not permeable to calcium as it discrimates stronger between monovalent cations. Its function is as follows. Has no pH-gated sodium channel activity per se but can associate with other ASICs and regulate their pH-sensitivity. The protein is Acid-sensing ion channel 1 of Rattus norvegicus (Rat).